Reading from the N-terminus, the 85-residue chain is MSLLDYFKSKKKPSTAVMAKERLQIIVAHQRGQRDTPDYFPQMKQEIIAVIRKYVQISDDQVSVQLDQNDDNLSVLELNVTLPDR.

This sequence belongs to the MinE family.

In terms of biological role, prevents the cell division inhibition by proteins MinC and MinD at internal division sites while permitting inhibition at polar sites. This ensures cell division at the proper site by restricting the formation of a division septum at the midpoint of the long axis of the cell. This is Cell division topological specificity factor from Shewanella oneidensis (strain ATCC 700550 / JCM 31522 / CIP 106686 / LMG 19005 / NCIMB 14063 / MR-1).